A 212-amino-acid chain; its full sequence is MQLTHFGHSCLLAEFGQTRLLFDPGTFSHGFEGITGLSAILITHQHPDHIDVTRLPTLLEDNPAAELYADPQTAAQLGEPWRAVHVGDELPLAELTVRAVGGCHAVIHPEIPVIENISYLVGDSKHRARLMHPGDALFVPGEQVDVLATPAAAPWMKISEAVDYLRAVAPARAVPIHQAIVAPDARGIYYGRLTEMTTTDFQVLPEESAVTF.

The sequence is that of Protein Rv0786c from Mycobacterium tuberculosis (strain ATCC 25618 / H37Rv).